We begin with the raw amino-acid sequence, 64 residues long: UPF0434 protein Bcep18194_A5877 (64 aa).

Belongs to the UPF0434 family.

This chain is UPF0434 protein Bcep18194_A5877, found in Burkholderia lata (strain ATCC 17760 / DSM 23089 / LMG 22485 / NCIMB 9086 / R18194 / 383).